Reading from the N-terminus, the 710-residue chain is Early transcription factor 82 kDa subunit (710 aa).

It belongs to the poxviridae VETF large subunit family. As to quaternary structure, heterodimer of a 70 kDa and a 82 kDa subunit. Part of the early transcription complex composed of ETF, RAP94/OPG109, and the DNA-directed RNA polymerase.

It localises to the virion. Acts with RNA polymerase to initiate transcription from early gene promoters. Is recruited by the RPO-associated protein of 94 kDa RAP94/OPG109 to form the early transcription complex, which also contains the core RNA polymerase. ETF heterodimer binds to early gene promoters. The polypeptide is Early transcription factor 82 kDa subunit (OPG133) (Vaccinia virus (strain Ankara) (VACV)).